The sequence spans 184 residues: Large ribosomal subunit protein uL5 (184 aa).

The protein belongs to the universal ribosomal protein uL5 family. Part of the 50S ribosomal subunit; part of the 5S rRNA/L5/L18/L25 subcomplex. Contacts the 5S rRNA and the P site tRNA. Forms a bridge to the 30S subunit in the 70S ribosome.

Its function is as follows. This is one of the proteins that bind and probably mediate the attachment of the 5S RNA into the large ribosomal subunit, where it forms part of the central protuberance. In the 70S ribosome it contacts protein S13 of the 30S subunit (bridge B1b), connecting the 2 subunits; this bridge is implicated in subunit movement. Contacts the P site tRNA; the 5S rRNA and some of its associated proteins might help stabilize positioning of ribosome-bound tRNAs. This Agrobacterium fabrum (strain C58 / ATCC 33970) (Agrobacterium tumefaciens (strain C58)) protein is Large ribosomal subunit protein uL5.